Consider the following 232-residue polypeptide: Ribose-5-phosphate isomerase A (232 aa).

Substrate contacts are provided by residues 28 to 31 (TGST), 83 to 86 (DGAD), and 96 to 99 (KGGG). Glu105 functions as the Proton acceptor in the catalytic mechanism. Residue Lys123 coordinates substrate.

This sequence belongs to the ribose 5-phosphate isomerase family. As to quaternary structure, homodimer.

The catalysed reaction is aldehydo-D-ribose 5-phosphate = D-ribulose 5-phosphate. Its pathway is carbohydrate degradation; pentose phosphate pathway; D-ribose 5-phosphate from D-ribulose 5-phosphate (non-oxidative stage): step 1/1. In terms of biological role, catalyzes the reversible conversion of ribose-5-phosphate to ribulose 5-phosphate. The protein is Ribose-5-phosphate isomerase A of Rhizobium leguminosarum bv. trifolii (strain WSM2304).